The chain runs to 209 residues: Ribonuclease HII (209 aa).

In terms of domain architecture, RNase H type-2 spans 7–198 (GPVAGVDEAG…VAKAHQEWLH (192 aa)). Residues aspartate 13, glutamate 14, and aspartate 107 each contribute to the a divalent metal cation site.

Belongs to the RNase HII family. It depends on Mn(2+) as a cofactor. Mg(2+) serves as cofactor.

The protein localises to the cytoplasm. The catalysed reaction is Endonucleolytic cleavage to 5'-phosphomonoester.. In terms of biological role, endonuclease that specifically degrades the RNA of RNA-DNA hybrids. This is Ribonuclease HII from Corynebacterium glutamicum (strain ATCC 13032 / DSM 20300 / JCM 1318 / BCRC 11384 / CCUG 27702 / LMG 3730 / NBRC 12168 / NCIMB 10025 / NRRL B-2784 / 534).